A 232-amino-acid chain; its full sequence is Aquaporin Z 2 (232 aa).

Transmembrane regions (helical) follow at residues 9–29 (FLGTCWLVLGGCGSAVLASAF) and 32–52 (VGIGLLGVSFAFGLTVLTMAY). The NPA 1 motif lies at 63–65 (NPA). 3 helical membrane-spanning segments follow: residues 82-102 (VSYVIAQVAGAIIAAAVLYVI), 129-149 (LTAALVTEVVMTFFFLIIILG), and 158-178 (GFAPIAIGLALTLIHLVSIPV). An NPA 2 motif is present at residues 184–186 (NPA). Residues 200 to 220 (LSQLWLFWIAPLFGAAIAGIV) form a helical membrane-spanning segment.

Belongs to the MIP/aquaporin (TC 1.A.8) family. As to quaternary structure, homotetramer.

The protein localises to the cell inner membrane. The catalysed reaction is H2O(in) = H2O(out). In terms of biological role, channel that permits osmotically driven movement of water in both directions. It is involved in the osmoregulation and in the maintenance of cell turgor during volume expansion in rapidly growing cells. It mediates rapid entry or exit of water in response to abrupt changes in osmolarity. In Rhizobium meliloti (strain 1021) (Ensifer meliloti), this protein is Aquaporin Z 2.